The chain runs to 144 residues: 3-hydroxyacyl-[acyl-carrier-protein] dehydratase FabZ (144 aa).

Residue H48 is part of the active site.

This sequence belongs to the thioester dehydratase family. FabZ subfamily.

Its subcellular location is the cytoplasm. It carries out the reaction a (3R)-hydroxyacyl-[ACP] = a (2E)-enoyl-[ACP] + H2O. In terms of biological role, involved in unsaturated fatty acids biosynthesis. Catalyzes the dehydration of short chain beta-hydroxyacyl-ACPs and long chain saturated and unsaturated beta-hydroxyacyl-ACPs. This Bacillus anthracis (strain A0248) protein is 3-hydroxyacyl-[acyl-carrier-protein] dehydratase FabZ.